A 463-amino-acid polypeptide reads, in one-letter code: Aromatic amino acid transport protein AroP (463 aa).

The next 12 helical transmembrane spans lie at 18 to 38, 40 to 60, 84 to 104, 117 to 137, 157 to 177, 200 to 220, 237 to 257, 276 to 296, 337 to 357, 358 to 378, 402 to 422, and 431 to 451; these read TMMG…GVGI, AAGP…VLVM, FGHW…IMVM, AWFG…FAVV, VAVI…WLPG, VAAG…VTIA, AVIW…TFLM, ILAM…IVLA, AVLL…WNPA, GLLD…WAMI, AHPW…ALML, and VYSV…TVNS.

The protein belongs to the amino acid-polyamine-organocation (APC) superfamily. Amino acid transporter (AAT) (TC 2.A.3.1) family.

The protein resides in the cell membrane. It catalyses the reaction L-phenylalanine(in) + H(+)(in) = L-phenylalanine(out) + H(+)(out). It carries out the reaction L-tryptophan(in) + H(+)(in) = L-tryptophan(out) + H(+)(out). The enzyme catalyses L-tyrosine(in) + H(+)(in) = L-tyrosine(out) + H(+)(out). Functionally, permease that is involved in the active transport across the cytoplasmic membrane of all three aromatic amino acids, phenylalanine, tyrosine and tryptophan. This is Aromatic amino acid transport protein AroP from Corynebacterium glutamicum (strain ATCC 13032 / DSM 20300 / JCM 1318 / BCRC 11384 / CCUG 27702 / LMG 3730 / NBRC 12168 / NCIMB 10025 / NRRL B-2784 / 534).